The chain runs to 239 residues: Large ribosomal subunit protein uL1 (239 aa).

The protein belongs to the universal ribosomal protein uL1 family. Part of the 50S ribosomal subunit.

In terms of biological role, binds directly to 23S rRNA. The L1 stalk is quite mobile in the ribosome, and is involved in E site tRNA release. Functionally, protein L1 is also a translational repressor protein, it controls the translation of the L11 operon by binding to its mRNA. This is Large ribosomal subunit protein uL1 from Rickettsia canadensis (strain McKiel).